The sequence spans 568 residues: 2-succinyl-5-enolpyruvyl-6-hydroxy-3-cyclohexene-1-carboxylate synthase (568 aa).

This sequence belongs to the TPP enzyme family. MenD subfamily. As to quaternary structure, homodimer. The cofactor is Mg(2+). Mn(2+) is required as a cofactor. Thiamine diphosphate serves as cofactor.

It carries out the reaction isochorismate + 2-oxoglutarate + H(+) = 5-enolpyruvoyl-6-hydroxy-2-succinyl-cyclohex-3-ene-1-carboxylate + CO2. It participates in quinol/quinone metabolism; 1,4-dihydroxy-2-naphthoate biosynthesis; 1,4-dihydroxy-2-naphthoate from chorismate: step 2/7. Its pathway is quinol/quinone metabolism; menaquinone biosynthesis. In terms of biological role, catalyzes the thiamine diphosphate-dependent decarboxylation of 2-oxoglutarate and the subsequent addition of the resulting succinic semialdehyde-thiamine pyrophosphate anion to isochorismate to yield 2-succinyl-5-enolpyruvyl-6-hydroxy-3-cyclohexene-1-carboxylate (SEPHCHC). This Histophilus somni (strain 2336) (Haemophilus somnus) protein is 2-succinyl-5-enolpyruvyl-6-hydroxy-3-cyclohexene-1-carboxylate synthase.